We begin with the raw amino-acid sequence, 463 residues long: mRNA-capping enzyme subunit alpha (463 aa).

K66 serves as the catalytic N6-GMP-lysine intermediate. The tract at residues 404-463 (WEERKSKKRTHSSISGPMLPPVAETKAPREATQSRYIDDEDWSDEADDDDEDSLKRARIE) is disordered. The segment covering 441-455 (DDEDWSDEADDDDED) has biased composition (acidic residues).

The protein belongs to the eukaryotic GTase family. As to quaternary structure, heterodimer. The mRNA-capping enzyme is composed of two separate chains alpha and beta, respectively a mRNA guanylyltransferase and an mRNA 5'-triphosphate monophosphatase.

The protein localises to the nucleus. It carries out the reaction a 5'-end diphospho-ribonucleoside in mRNA + GTP + H(+) = a 5'-end (5'-triphosphoguanosine)-ribonucleoside in mRNA + diphosphate. Its function is as follows. Second step of mRNA capping. Transfer of the GMP moiety of GTP to the 5'-end of RNA via an enzyme-GMP covalent reaction intermediate. The sequence is that of mRNA-capping enzyme subunit alpha (CEG1) from Eremothecium gossypii (strain ATCC 10895 / CBS 109.51 / FGSC 9923 / NRRL Y-1056) (Yeast).